The sequence spans 140 residues: Virion protein 5 (140 aa).

It localises to the virion. The sequence is that of Virion protein 5 from Enterococcus faecalis (Streptococcus faecalis).